Consider the following 348-residue polypeptide: Phosphate acyltransferase (348 aa).

It belongs to the PlsX family. In terms of assembly, homodimer. Probably interacts with PlsY.

The protein localises to the cytoplasm. It catalyses the reaction a fatty acyl-[ACP] + phosphate = an acyl phosphate + holo-[ACP]. It functions in the pathway lipid metabolism; phospholipid metabolism. Catalyzes the reversible formation of acyl-phosphate (acyl-PO(4)) from acyl-[acyl-carrier-protein] (acyl-ACP). This enzyme utilizes acyl-ACP as fatty acyl donor, but not acyl-CoA. The protein is Phosphate acyltransferase of Lactiplantibacillus plantarum (strain ATCC BAA-793 / NCIMB 8826 / WCFS1) (Lactobacillus plantarum).